The chain runs to 461 residues: Cysteine--tRNA ligase (461 aa).

Cysteine 28 provides a ligand contact to Zn(2+). The short motif at 30 to 40 (ITVYDLCHIGH) is the 'HIGH' region element. The Zn(2+) site is built by cysteine 209, histidine 234, and glutamate 238. Positions 266 to 270 (KMSKS) match the 'KMSKS' region motif. ATP is bound at residue lysine 269.

The protein belongs to the class-I aminoacyl-tRNA synthetase family. Monomer. Zn(2+) is required as a cofactor.

It is found in the cytoplasm. The catalysed reaction is tRNA(Cys) + L-cysteine + ATP = L-cysteinyl-tRNA(Cys) + AMP + diphosphate. The protein is Cysteine--tRNA ligase of Salmonella agona (strain SL483).